A 206-amino-acid chain; its full sequence is Ras-related protein ralB-B (206 aa).

21–28 (GSGGVGKS) provides a ligand contact to GTP. The Effector region signature appears at 43-51 (YEPTKADSY). GTP-binding positions include 68 to 72 (DTAGQ) and 128 to 131 (NKSD). Over residues 180 to 189 (KMSENKDKNG) the composition is skewed to basic and acidic residues. Residues 180–206 (KMSENKDKNGKKSGKSKKGFKQRCCLL) form a disordered region. Over residues 190–200 (KKSGKSKKGFK) the composition is skewed to basic residues. At C203 the chain carries Cysteine methyl ester. Residue C203 is the site of S-geranylgeranyl cysteine attachment. The propeptide at 204 to 206 (CLL) is removed in mature form.

This sequence belongs to the small GTPase superfamily. Ras family. Interacts with ralbp1 and rap1gds1.

The protein localises to the cell membrane. It is found in the midbody. The catalysed reaction is GTP + H2O = GDP + phosphate + H(+). Its function is as follows. Multifunctional GTPase involved in a variety of cellular processes including gene expression, cell migration, cell proliferation, oncogenic transformation and membrane trafficking. Accomplishes its multiple functions by interacting with distinct downstream effectors. Acts as a GTP sensor for GTP-dependent exocytosis of dense core vesicles. Required both to stabilize the assembly of the exocyst complex and to localize functional exocyst complexes to the leading edge of migrating cells. Required for suppression of apoptosis. In late stages of cytokinesis, upon completion of the bridge formation between dividing cells, mediates exocyst recruitment to the midbody to drive abscission. Regulates the actin cytoskeleton to play a role in gastrulation or neurulation. During the cleavage stages, the GTP-bound form induces a cortical reaction that affects the localization of pigment granules. Activated by the FGF pathway via ras and ral-GDS, but independently of raf. Directs ralbp1 to the plasma membrane. Involved in ligand-dependent receptor mediated endocytosis of the EGF and insulin receptors. This is Ras-related protein ralB-B (ralb-b) from Xenopus laevis (African clawed frog).